The primary structure comprises 453 residues: Bifunctional protein GlmU (453 aa).

The segment at 1-225 is pyrophosphorylase; the sequence is MNIVILAAGT…DWETLGVNSK (225 aa). UDP-N-acetyl-alpha-D-glucosamine-binding positions include 6–9, Lys20, Gln71, 76–77, 98–100, Gly135, Glu150, Asn165, and Asn223; these read LAAG, GT, and YGD. Residue Asp100 coordinates Mg(2+). Mg(2+) is bound at residue Asn223. Residues 226–246 form a linker region; that stretch reads AQLAELERIHQRNVADALLVE. The interval 247-453 is N-acetyltransferase; sequence GVTLADPARV…GYVRPVKKKS (207 aa). Arg329 and Lys347 together coordinate UDP-N-acetyl-alpha-D-glucosamine. The Proton acceptor role is filled by His359. UDP-N-acetyl-alpha-D-glucosamine contacts are provided by Tyr362 and Asn373. Acetyl-CoA is bound by residues Ala376, 382–383, Ser401, and Ala419; that span reads NY.

It in the N-terminal section; belongs to the N-acetylglucosamine-1-phosphate uridyltransferase family. This sequence in the C-terminal section; belongs to the transferase hexapeptide repeat family. In terms of assembly, homotrimer. Requires Mg(2+) as cofactor.

The protein resides in the cytoplasm. It carries out the reaction alpha-D-glucosamine 1-phosphate + acetyl-CoA = N-acetyl-alpha-D-glucosamine 1-phosphate + CoA + H(+). It catalyses the reaction N-acetyl-alpha-D-glucosamine 1-phosphate + UTP + H(+) = UDP-N-acetyl-alpha-D-glucosamine + diphosphate. Its pathway is nucleotide-sugar biosynthesis; UDP-N-acetyl-alpha-D-glucosamine biosynthesis; N-acetyl-alpha-D-glucosamine 1-phosphate from alpha-D-glucosamine 6-phosphate (route II): step 2/2. It participates in nucleotide-sugar biosynthesis; UDP-N-acetyl-alpha-D-glucosamine biosynthesis; UDP-N-acetyl-alpha-D-glucosamine from N-acetyl-alpha-D-glucosamine 1-phosphate: step 1/1. It functions in the pathway bacterial outer membrane biogenesis; LPS lipid A biosynthesis. In terms of biological role, catalyzes the last two sequential reactions in the de novo biosynthetic pathway for UDP-N-acetylglucosamine (UDP-GlcNAc). The C-terminal domain catalyzes the transfer of acetyl group from acetyl coenzyme A to glucosamine-1-phosphate (GlcN-1-P) to produce N-acetylglucosamine-1-phosphate (GlcNAc-1-P), which is converted into UDP-GlcNAc by the transfer of uridine 5-monophosphate (from uridine 5-triphosphate), a reaction catalyzed by the N-terminal domain. The sequence is that of Bifunctional protein GlmU from Burkholderia vietnamiensis (strain G4 / LMG 22486) (Burkholderia cepacia (strain R1808)).